Here is a 235-residue protein sequence, read N- to C-terminus: Orotidine 5'-phosphate decarboxylase (235 aa).

Substrate contacts are provided by residues Asp-9, Lys-31, 58–67 (DLKFHDIPNT), Thr-121, Arg-180, Gln-190, Gly-210, and Arg-211. Lys-60 (proton donor) is an active-site residue.

This sequence belongs to the OMP decarboxylase family. Type 1 subfamily. As to quaternary structure, homodimer.

It carries out the reaction orotidine 5'-phosphate + H(+) = UMP + CO2. The protein operates within pyrimidine metabolism; UMP biosynthesis via de novo pathway; UMP from orotate: step 2/2. In terms of biological role, catalyzes the decarboxylation of orotidine 5'-monophosphate (OMP) to uridine 5'-monophosphate (UMP). This chain is Orotidine 5'-phosphate decarboxylase, found in Nitratidesulfovibrio vulgaris (strain ATCC 29579 / DSM 644 / CCUG 34227 / NCIMB 8303 / VKM B-1760 / Hildenborough) (Desulfovibrio vulgaris).